The chain runs to 42 residues: MGDILTGVSGAEAATAMIAAAAIIALVGFTKWGAKKVASFFG.

The Periplasmic segment spans residues 1–12 (MGDILTGVSGAE). Residues 13–34 (AATAMIAAAAIIALVGFTKWGA) traverse the membrane as a helical segment. Topologically, residues 35 to 42 (KKVASFFG) are cytoplasmic.

This sequence belongs to the inovirus capsid protein family. Homomultimerizes. There are several thousands of this protein in the phage capsid.

It is found in the virion. The protein resides in the host membrane. In terms of biological role, self assembles to form a helical capsid wrapping up the viral genomic DNA. The capsid displays a filamentous structure with a length of 760-1950 nm and a width of 6-8 nm. The virion assembly and budding take place at the host inner membrane. This chain is Capsid protein G8P (VIII), found in Xanthomonas phage phiLf (Bacteriophage phi-Lf).